The chain runs to 328 residues: AA9 family lytic polysaccharide monooxygenase A (328 aa).

Residues 1–21 (MPSTKVAALSAVLALASTVAG) form the signal peptide. His-22 contributes to the Cu(2+) binding site. The residue at position 22 (His-22) is a Methylhistidine. 2 cysteine pairs are disulfide-bonded: Cys-77–Cys-199 and Cys-118–Cys-122. Residue Asn-80 is glycosylated (N-linked (GlcNAc...) asparagine). A Cu(2+)-binding site is contributed by His-107. N-linked (GlcNAc...) asparagine glycosylation is found at Asn-121 and Asn-159. Residues His-185 and Gln-194 each coordinate O2. Residue Tyr-196 coordinates Cu(2+). 2 O-linked (Man...) serine glycosylation sites follow: Ser-235 and Ser-237. Thr-238 and Thr-245 each carry an O-linked (Man...) threonine glycan.

The protein belongs to the polysaccharide monooxygenase AA9 family. Requires Cu(2+) as cofactor. The catalytically essential N-terminal histidine His-22 is post-translationally modified by methylation to prevent protonation of the histidine side chain, and protect the critical active site of the enzyme from oxidative damage.

The protein resides in the secreted. The catalysed reaction is [(1-&gt;4)-beta-D-glucosyl]n+m + reduced acceptor + O2 = 4-dehydro-beta-D-glucosyl-[(1-&gt;4)-beta-D-glucosyl]n-1 + [(1-&gt;4)-beta-D-glucosyl]m + acceptor + H2O.. In terms of biological role, lytic polysaccharide monooxygenase (LPMO) that depolymerizes crystalline and amorphous polysaccharides via the oxidation of scissile alpha- or beta-(1-4)-glycosidic bonds, yielding C1 and C4 oxidation products. Catalysis by LPMOs requires the reduction of the active-site copper from Cu(II) to Cu(I) by a reducing agent and H(2)O(2) or O(2) as a cosubstrate. Shows activity on cellulosic substrates (Avicel, carboxymethylcellulose) and xylan. In Talaromyces verruculosus (Penicillium verruculosum), this protein is AA9 family lytic polysaccharide monooxygenase A.